The primary structure comprises 323 residues: Aspartate carbamoyltransferase catalytic subunit (323 aa).

2 residues coordinate carbamoyl phosphate: R71 and T72. K99 serves as a coordination point for L-aspartate. R121, H151, and Q154 together coordinate carbamoyl phosphate. R184 and R239 together coordinate L-aspartate. Carbamoyl phosphate-binding residues include G280 and P281.

The protein belongs to the aspartate/ornithine carbamoyltransferase superfamily. ATCase family. Heterododecamer (2C3:3R2) of six catalytic PyrB chains organized as two trimers (C3), and six regulatory PyrI chains organized as three dimers (R2).

The catalysed reaction is carbamoyl phosphate + L-aspartate = N-carbamoyl-L-aspartate + phosphate + H(+). It functions in the pathway pyrimidine metabolism; UMP biosynthesis via de novo pathway; (S)-dihydroorotate from bicarbonate: step 2/3. Its function is as follows. Catalyzes the condensation of carbamoyl phosphate and aspartate to form carbamoyl aspartate and inorganic phosphate, the committed step in the de novo pyrimidine nucleotide biosynthesis pathway. The sequence is that of Aspartate carbamoyltransferase catalytic subunit from Ralstonia pickettii (strain 12J).